Reading from the N-terminus, the 418-residue chain is Inner capsid protein sigma-2 (418 aa).

This sequence belongs to the orthoreovirus sigma-1 protein family. As to quaternary structure, interacts with protein mu-NS; in viral inclusions.

The protein resides in the virion. Functionally, inner capsid (core) component. This Mammalia (T2J) protein is Inner capsid protein sigma-2 (S2).